A 644-amino-acid chain; its full sequence is MLEEKFLDLLAQKYDSEEKVVTEIINLEAILDLPKGTEHFVSDLHGEYQAFQHVLRNGSGKVKEKIRDIFKHELSEKEINEFATLIYYPEEKLQLIRNQFDNKQELNAWYTKTIDQMIRLIPYASSKYTRTKLRKALPKQFVYIIEELLYKTDEYTNKKHYYSKIVQKVISLGQADKLIIGLAYTTQQLVVDHLHVVGDIYDRGPEPDKIMEALINYHSLDIQWGNHDVLWIGAFSGSKVCLANILRICARYDNLDIIEDVYGINLRPLLNLAEKYYKDNPAFRPKRHSNKKLSDQEQSQITKIHQAIAMIQFKLEMPIIKRRPYFNMSKRLLLEKVDYENNKITIDGKTYPLENTCFATVNPDQPDELLEEEKQVMDKLLFSVQHSEKLARHMEFLMKKGTLYLRYNGNLLIHGCIPIDENGNMEKMFIENKTYAGRELLDIFENYLLHAFSNREATDDLATDMVWYLWTGEYSSLFGKREMTTFERYFIKDKALHKERKNPYYYLREKEGICRMILEEFDLDPDQGHIINGHTPVKEIEGENPIKANGKMIVIDGGFSKAYQPTTGIAGYTLLYNSFGMQLVAHQHFNSKEDVLQNGNDVLSVKRLVDEELERKKISETNIGEKLIEDINMLNSLLKYRYLK.

This sequence belongs to the FBPase class 3 family. It depends on Mn(2+) as a cofactor.

The enzyme catalyses beta-D-fructose 1,6-bisphosphate + H2O = beta-D-fructose 6-phosphate + phosphate. The protein operates within carbohydrate biosynthesis; gluconeogenesis. The protein is Fructose-1,6-bisphosphatase class 3 of Oceanobacillus iheyensis (strain DSM 14371 / CIP 107618 / JCM 11309 / KCTC 3954 / HTE831).